The chain runs to 249 residues: Triosephosphate isomerase (249 aa).

Substrate is bound at residue 9-11; that stretch reads NWK. H94 serves as the catalytic Electrophile. E166 functions as the Proton acceptor in the catalytic mechanism. Substrate-binding positions include G172, S214, and 235-236; that span reads GG.

This sequence belongs to the triosephosphate isomerase family. In terms of assembly, homodimer.

The protein resides in the cytoplasm. It carries out the reaction D-glyceraldehyde 3-phosphate = dihydroxyacetone phosphate. The protein operates within carbohydrate biosynthesis; gluconeogenesis. It participates in carbohydrate degradation; glycolysis; D-glyceraldehyde 3-phosphate from glycerone phosphate: step 1/1. Its function is as follows. Involved in the gluconeogenesis. Catalyzes stereospecifically the conversion of dihydroxyacetone phosphate (DHAP) to D-glyceraldehyde-3-phosphate (G3P). The chain is Triosephosphate isomerase from Leptospira biflexa serovar Patoc (strain Patoc 1 / Ames).